Reading from the N-terminus, the 273-residue chain is Gamma-glutamyl cyclotransferase aclK (273 aa).

Belongs to the class-I pyridoxal-phosphate-dependent aminotransferase family.

The catalysed reaction is an alpha-(gamma-L-glutamyl)-L-amino acid = 5-oxo-L-proline + an L-alpha-amino acid. The protein operates within mycotoxin biosynthesis. Gamma-glutamyl cyclotransferase; part of the gene cluster that mediates the biosynthesis of aspirochlorine (or antibiotic A30641), an unusual halogenated spiro compound with distinctive antifungal properties due to selective inhibition of protein biosynthesis, and which is also active against bacteria, viruses, and murine tumor cells. The non-ribosomal peptide synthetase (NRPS) aclP is responsible the formation of the diketopiperazine (DKP) core from the condensation of 2 phenylalanine residues. One Phe residue is tailored into chlorotyrosine by hydroxylation and chlorination, whereas the second Phe undergoes an unprecedented C-C bond cleavage to be converted into glycine. After formation of the DKP, sulfur is incorporated into the DKP by conjugation with glutathione by aclG, followed by its stepwise degradation to the thiol by aclI, aclJ and aclK, and the dithiol oxidation by aclT. In addition, oxygenases (aclB, aclC, aclL and aclO) and O-methyltransferases (aclM and aclU) act as tailoring enzymes to produce the intermediate dechloroaspirochlorine. Ultimately, chlorination of dechloroaspirochlorine by the halogenase aclH is the last step in the aspirochlorine pathway. The sequence is that of Gamma-glutamyl cyclotransferase aclK from Aspergillus oryzae (strain ATCC 42149 / RIB 40) (Yellow koji mold).